Consider the following 567-residue polypeptide: Alpha-glucosidase (567 aa).

The N-terminal stretch at 1 to 17 is a signal peptide; the sequence is MKAVIVFCLMALSIVDA. Residues N88 and N123 are each glycosylated (N-linked (GlcNAc...) asparagine). D223 acts as the Nucleophile in catalysis. N-linked (GlcNAc...) asparagine glycosylation is present at N247. E286 acts as the Proton donor in catalysis. 5 N-linked (GlcNAc...) asparagine glycosylation sites follow: N290, N313, N319, N499, and N507.

As to quaternary structure, monomer. Expressed specifically in the hypopharyngeal glands of worker bees. Also found in the brain of worker bees (at protein level).

The enzyme catalyses Hydrolysis of terminal, non-reducing (1-&gt;4)-linked alpha-D-glucose residues with release of alpha-D-glucose.. In terms of biological role, converts sucrose in nectar to glucose and fructose. The chain is Alpha-glucosidase from Apis mellifera (Honeybee).